Consider the following 342-residue polypeptide: Dihydroorotase (342 aa).

Histidine 13 and histidine 15 together coordinate Zn(2+). Substrate-binding positions include 15–17 (HLR) and asparagine 41. Zn(2+)-binding residues include lysine 98, histidine 135, and histidine 173. Lysine 98 is subject to N6-carboxylysine. Residue histidine 135 participates in substrate binding. Leucine 218 is a substrate binding site. Residue aspartate 246 participates in Zn(2+) binding. Aspartate 246 is a catalytic residue. Positions 250 and 262 each coordinate substrate.

The protein belongs to the metallo-dependent hydrolases superfamily. DHOase family. Class II DHOase subfamily. Homodimer. Zn(2+) is required as a cofactor.

The catalysed reaction is (S)-dihydroorotate + H2O = N-carbamoyl-L-aspartate + H(+). The protein operates within pyrimidine metabolism; UMP biosynthesis via de novo pathway; (S)-dihydroorotate from bicarbonate: step 3/3. In terms of biological role, catalyzes the reversible cyclization of carbamoyl aspartate to dihydroorotate. The polypeptide is Dihydroorotase (Aliivibrio fischeri (strain ATCC 700601 / ES114) (Vibrio fischeri)).